We begin with the raw amino-acid sequence, 175 residues long: FOXL2 neighbor protein (175 aa).

Disordered stretches follow at residues 1-39 (MTRT…PALV) and 70-100 (AQKT…GKRR).

The protein is FOXL2 neighbor protein (FOXL2NB) of Homo sapiens (Human).